The following is a 209-amino-acid chain: Inorganic pyrophosphatase (209 aa).

Positions 38, 52, and 64 each coordinate substrate. Residues Asp92, Asp97, and Asp130 each contribute to the Mg(2+) site. Tyr167 is a binding site for substrate.

This sequence belongs to the PPase family. In terms of assembly, homohexamer. Mg(2+) serves as cofactor.

The protein localises to the cytoplasm. It carries out the reaction diphosphate + H2O = 2 phosphate + H(+). Catalyzes the hydrolysis of inorganic pyrophosphate (PPi) forming two phosphate ions. The sequence is that of Inorganic pyrophosphatase from Chlamydia trachomatis serovar L2 (strain ATCC VR-902B / DSM 19102 / 434/Bu).